The primary structure comprises 169 residues: Glycine-rich RNA-binding protein 10 (169 aa).

In terms of domain architecture, RRM spans 6–84; it reads YRCFVGGLAW…RTITVNEAQS (79 aa). Disordered stretches follow at residues 80-101 and 121-169; these read NEAQ…YGGR and GYGS…GGGW. Positions 85 to 101 are enriched in gly residues; sequence RGGGGGGGRGGGGYGGR.

In terms of tissue distribution, expressed only in roots and stems.

Its function is as follows. Possibly has a role in RNA transcription or processing during stress. The protein is Glycine-rich RNA-binding protein 10 (GRP10) of Brassica napus (Rape).